A 241-amino-acid chain; its full sequence is MSRKFISEFLGTFWLVFGGCGSAVFAAAFPELGIGFLGVAFAFGLTVLTMAYAVGGISGGHFNPAVSVGLTVAGKFPAANLVPYIVAQVLGAVVAAAALYVILTGKAGAEIGGFAANGYGEHSPGGYSLLSALLIEIILTAFFLVVILGSTHGRVPVGFAPVAIGLALTLIHLISIPVTNTSVNPARSTGQALFVGGWALQQLWLFWLAPILGGAIGAVVWKIFGEEEKAGHAGSVQPAKT.

A helical membrane pass occupies residues 23–43; the sequence is AVFAAAFPELGIGFLGVAFAF. The short motif at 63-65 is the NPA 1 element; it reads NPA. Transmembrane regions (helical) follow at residues 85 to 105, 129 to 149, and 156 to 176; these read IVAQ…ILTG, LLSA…VILG, and PVGF…LISI. The NPA 2 motif lies at 184-186; it reads NPA. The helical transmembrane segment at 204–224 threads the bilayer; it reads WLFWLAPILGGAIGAVVWKIF.

Belongs to the MIP/aquaporin (TC 1.A.8) family. As to quaternary structure, homotetramer.

The protein resides in the cell inner membrane. It carries out the reaction H2O(in) = H2O(out). Channel that permits osmotically driven movement of water in both directions. It is involved in the osmoregulation and in the maintenance of cell turgor during volume expansion in rapidly growing cells. It mediates rapid entry or exit of water in response to abrupt changes in osmolarity. The polypeptide is Aquaporin Z 1 (Agrobacterium fabrum (strain C58 / ATCC 33970) (Agrobacterium tumefaciens (strain C58))).